Consider the following 185-residue polypeptide: Thiol:disulfide interchange protein DsbE (185 aa).

The Cytoplasmic segment spans residues 1 to 4 (MKRN). Residues 5–25 (VLLLPLLIFLLIAAALLWQLA) traverse the membrane as a helical segment. Topologically, residues 26–185 (RNAQGDDPTN…WDRYSREAAQ (160 aa)) are periplasmic. Residues 39–177 (ALTGKPVPAF…WESELKPLWD (139 aa)) enclose the Thioredoxin domain. Cys80 and Cys83 are joined by a disulfide.

The protein belongs to the thioredoxin family. DsbE subfamily.

The protein resides in the cell inner membrane. Its function is as follows. Involved in disulfide bond formation. Catalyzes a late, reductive step in the assembly of periplasmic c-type cytochromes, probably the reduction of disulfide bonds of the apocytochrome c to allow covalent linkage with the heme. Possible subunit of a heme lyase. The protein is Thiol:disulfide interchange protein DsbE (dsbE1) of Salmonella typhimurium (strain LT2 / SGSC1412 / ATCC 700720).